The chain runs to 209 residues: rRNA N(6)-adenosine-methyltransferase METTL5 (209 aa).

S-adenosyl-L-methionine-binding positions include glutamine 28, threonine 31, glycine 59, cysteine 62, valine 64, aspartate 81, and 108–109; that span reads DV.

This sequence belongs to the methyltransferase superfamily. PrmA family. Heterodimer; heterodimerizes with TRMT112. In terms of tissue distribution, expressed from very early development (8 post-conceptual weeks) and expression persists through adulthood in multiple substructures of the brain, including the cerebellar cortex, hippocampus, and striatum.

The protein localises to the nucleus. The protein resides in the presynapse. It is found in the postsynapse. The catalysed reaction is adenosine(1832) in 18S rRNA + S-adenosyl-L-methionine = N(6)-methyladenosine(1832) in 18S rRNA + S-adenosyl-L-homocysteine + H(+). RRNA N6-adenosine-methyltransferase activity is inhibited by zinc. Functionally, catalytic subunit of a heterodimer with TRMT112, which specifically methylates the 6th position of adenine in position 1832 of 18S rRNA. N6-methylation of adenine(1832) in 18S rRNA resides in the decoding center of 18S rRNA and is required for translation and embryonic stem cells (ESCs) pluripotency and differentiation. The protein is rRNA N(6)-adenosine-methyltransferase METTL5 of Homo sapiens (Human).